Reading from the N-terminus, the 272-residue chain is Phosphoribosylformylglycinamidine synthase subunit PurQ (272 aa).

In terms of domain architecture, Glutamine amidotransferase type-1 spans 8–243 (VLVMSGYGIN…SEPEYQLKKE (236 aa)). The Nucleophile role is filled by Cys-98. Residues His-225, Glu-227, and Glu-235 contribute to the active site.

In terms of assembly, part of the FGAM synthase complex composed of 1 PurL, 1 PurQ and 2 PurS subunits.

It is found in the cytoplasm. The catalysed reaction is N(2)-formyl-N(1)-(5-phospho-beta-D-ribosyl)glycinamide + L-glutamine + ATP + H2O = 2-formamido-N(1)-(5-O-phospho-beta-D-ribosyl)acetamidine + L-glutamate + ADP + phosphate + H(+). It carries out the reaction L-glutamine + H2O = L-glutamate + NH4(+). It participates in purine metabolism; IMP biosynthesis via de novo pathway; 5-amino-1-(5-phospho-D-ribosyl)imidazole from N(2)-formyl-N(1)-(5-phospho-D-ribosyl)glycinamide: step 1/2. In terms of biological role, part of the phosphoribosylformylglycinamidine synthase complex involved in the purines biosynthetic pathway. Catalyzes the ATP-dependent conversion of formylglycinamide ribonucleotide (FGAR) and glutamine to yield formylglycinamidine ribonucleotide (FGAM) and glutamate. The FGAM synthase complex is composed of three subunits. PurQ produces an ammonia molecule by converting glutamine to glutamate. PurL transfers the ammonia molecule to FGAR to form FGAM in an ATP-dependent manner. PurS interacts with PurQ and PurL and is thought to assist in the transfer of the ammonia molecule from PurQ to PurL. The protein is Phosphoribosylformylglycinamidine synthase subunit PurQ of Methanococcus maripaludis (strain C7 / ATCC BAA-1331).